Reading from the N-terminus, the 339-residue chain is NADPH dehydrogenase (339 aa).

Position 21–24 (21–24 (PPMC)) interacts with FMN. Tyrosine 26 serves as a coordination point for substrate. The FMN site is built by alanine 57 and glutamine 99. 162 to 165 (HGAH) is a binding site for substrate. FMN contacts are provided by residues arginine 215 and 307 to 308 (GR).

This sequence belongs to the NADH:flavin oxidoreductase/NADH oxidase family. NamA subfamily. As to quaternary structure, homotetramer. The cofactor is FMN.

The catalysed reaction is A + NADPH + H(+) = AH2 + NADP(+). In terms of biological role, catalyzes the reduction of the double bond of an array of alpha,beta-unsaturated aldehydes and ketones. It also reduces the nitro group of nitroester and nitroaromatic compounds. It could have a role in detoxification processes. This chain is NADPH dehydrogenase, found in Clostridium acetobutylicum (strain ATCC 824 / DSM 792 / JCM 1419 / IAM 19013 / LMG 5710 / NBRC 13948 / NRRL B-527 / VKM B-1787 / 2291 / W).